A 901-amino-acid polypeptide reads, in one-letter code: Probable inorganic carbon transporter subunit DabA (901 aa).

C424, D426, H606, and C621 together coordinate Zn(2+).

This sequence belongs to the inorganic carbon transporter (TC 9.A.2) DabA family. Forms a complex with DabB. It depends on Zn(2+) as a cofactor.

The protein resides in the cell membrane. Functionally, part of an energy-coupled inorganic carbon pump. This is Probable inorganic carbon transporter subunit DabA from Staphylococcus aureus (strain USA300).